A 355-amino-acid chain; its full sequence is Uroporphyrinogen decarboxylase (355 aa).

Substrate-binding positions include 36 to 40, aspartate 85, tyrosine 160, serine 215, and histidine 334; that span reads RQAGR.

Belongs to the uroporphyrinogen decarboxylase family. As to quaternary structure, homodimer.

It is found in the cytoplasm. The enzyme catalyses uroporphyrinogen III + 4 H(+) = coproporphyrinogen III + 4 CO2. It participates in porphyrin-containing compound metabolism; protoporphyrin-IX biosynthesis; coproporphyrinogen-III from 5-aminolevulinate: step 4/4. Functionally, catalyzes the decarboxylation of four acetate groups of uroporphyrinogen-III to yield coproporphyrinogen-III. This is Uroporphyrinogen decarboxylase from Rhodococcus erythropolis (strain PR4 / NBRC 100887).